The sequence spans 194 residues: Large ribosomal subunit protein bL9 (194 aa).

The tract at residues 167–194 (EDRAAEAEAASDMAAGGAGSFEGDHYES) is disordered.

Belongs to the bacterial ribosomal protein bL9 family.

Functionally, binds to the 23S rRNA. This is Large ribosomal subunit protein bL9 from Caulobacter sp. (strain K31).